A 337-amino-acid chain; its full sequence is Phosphatidate cytidylyltransferase, mitochondrial (337 aa).

It belongs to the TAM41 family. It depends on Mg(2+) as a cofactor. In terms of tissue distribution, brain and liver.

It is found in the mitochondrion inner membrane. The enzyme catalyses a 1,2-diacyl-sn-glycero-3-phosphate + CTP + H(+) = a CDP-1,2-diacyl-sn-glycerol + diphosphate. It functions in the pathway phospholipid metabolism; CDP-diacylglycerol biosynthesis; CDP-diacylglycerol from sn-glycerol 3-phosphate: step 3/3. In terms of biological role, catalyzes the conversion of phosphatidic acid (PA) to CDP-diacylglycerol (CDP-DAG), an essential intermediate in the synthesis of phosphatidylglycerol, cardiolipin and phosphatidylinositol. In Rattus norvegicus (Rat), this protein is Phosphatidate cytidylyltransferase, mitochondrial (Tamm41).